The following is a 91-amino-acid chain: MARICLHAYVGGRVQGVGFRQATREEADRLELDGWVRNLDDGRVEVVWEGEEDRAKALERWLGRGPRHAEVSAVEVEQMPLQGIAGFVVRR.

One can recognise an Acylphosphatase-like domain in the interval 5 to 91 (CLHAYVGGRV…QGIAGFVVRR (87 aa)). Residues R20 and N38 contribute to the active site.

This sequence belongs to the acylphosphatase family.

The enzyme catalyses an acyl phosphate + H2O = a carboxylate + phosphate + H(+). This is Acylphosphatase (acyP) from Pseudomonas aeruginosa (strain ATCC 15692 / DSM 22644 / CIP 104116 / JCM 14847 / LMG 12228 / 1C / PRS 101 / PAO1).